The sequence spans 205 residues: NADH-ubiquinone oxidoreductase chain 6 (205 aa).

Helical transmembrane passes span 48–68, 86–106, and 150–170; these read FFAM…FLFV, YLPV…FILD, and VWFL…IVLT.

This sequence belongs to the complex I subunit 6 family. As to quaternary structure, complex I is composed of at least 49 different subunits.

The protein localises to the mitochondrion membrane. The catalysed reaction is a ubiquinone + NADH + 5 H(+)(in) = a ubiquinol + NAD(+) + 4 H(+)(out). Functionally, core subunit of the mitochondrial membrane respiratory chain NADH dehydrogenase (Complex I) that is believed to belong to the minimal assembly required for catalysis. Complex I functions in the transfer of electrons from NADH to the respiratory chain. The immediate electron acceptor for the enzyme is believed to be ubiquinone. In Arabidopsis thaliana (Mouse-ear cress), this protein is NADH-ubiquinone oxidoreductase chain 6 (ND6).